Here is a 179-residue protein sequence, read N- to C-terminus: Large ribosomal subunit protein uL6 (179 aa).

It belongs to the universal ribosomal protein uL6 family. Part of the 50S ribosomal subunit.

Functionally, this protein binds to the 23S rRNA, and is important in its secondary structure. It is located near the subunit interface in the base of the L7/L12 stalk, and near the tRNA binding site of the peptidyltransferase center. This Synechococcus sp. (strain CC9311) protein is Large ribosomal subunit protein uL6.